We begin with the raw amino-acid sequence, 261 residues long: UPF0246 protein Daci_5283 (261 aa).

This sequence belongs to the UPF0246 family.

This Delftia acidovorans (strain DSM 14801 / SPH-1) protein is UPF0246 protein Daci_5283.